We begin with the raw amino-acid sequence, 800 residues long: Transducin beta-like protein 3 (800 aa).

Alanine 2 carries the N-acetylalanine modification. 13 WD repeats span residues glutamate 64–lysine 105, isoleucine 107–histidine 146, glycine 149–valine 190, alanine 193–threonine 232, leucine 245–alanine 284, glycine 290–glutamine 329, glycine 332–leucine 372, glycine 374–cysteine 413, glycine 419–glycine 459, cysteine 477–threonine 516, glycine 519–glutamate 560, histidine 562–aspartate 602, and histidine 604–glutamate 642. Position 257 is a phosphoserine (serine 257). Lysine 407 is covalently cross-linked (Glycyl lysine isopeptide (Lys-Gly) (interchain with G-Cter in SUMO2)).

As to quaternary structure, part of the small subunit (SSU) processome, composed of more than 70 proteins and the RNA chaperone small nucleolar RNA (snoRNA) U3.

Its subcellular location is the nucleus. The protein resides in the nucleolus. Part of the small subunit (SSU) processome, first precursor of the small eukaryotic ribosomal subunit. During the assembly of the SSU processome in the nucleolus, many ribosome biogenesis factors, an RNA chaperone and ribosomal proteins associate with the nascent pre-rRNA and work in concert to generate RNA folding, modifications, rearrangements and cleavage as well as targeted degradation of pre-ribosomal RNA by the RNA exosome. This is Transducin beta-like protein 3 (TBL3) from Bos taurus (Bovine).